The chain runs to 915 residues: Protein translocase subunit SecA (915 aa).

Residues Gln87, 105–109 (GEGKT), and Asp512 contribute to the ATP site. Over residues 849–864 (AAQQQARQAPLPNAPA) the composition is skewed to low complexity. The segment at 849-915 (AAQQQARQAP…CHGSRAKDHA (67 aa)) is disordered. Residues 876–891 (PEEKVARVAAERHIGR) are compositionally biased toward basic and acidic residues. Residues Cys895, Cys897, Cys906, and His907 each contribute to the Zn(2+) site.

The protein belongs to the SecA family. As to quaternary structure, monomer and homodimer. Part of the essential Sec protein translocation apparatus which comprises SecA, SecYEG and auxiliary proteins SecDF-YajC and YidC. It depends on Zn(2+) as a cofactor.

Its subcellular location is the cell inner membrane. It is found in the cytoplasm. The enzyme catalyses ATP + H2O + cellular proteinSide 1 = ADP + phosphate + cellular proteinSide 2.. Functionally, part of the Sec protein translocase complex. Interacts with the SecYEG preprotein conducting channel. Has a central role in coupling the hydrolysis of ATP to the transfer of proteins into and across the cell membrane, serving both as a receptor for the preprotein-SecB complex and as an ATP-driven molecular motor driving the stepwise translocation of polypeptide chains across the membrane. The chain is Protein translocase subunit SecA from Actinobacillus succinogenes (strain ATCC 55618 / DSM 22257 / CCUG 43843 / 130Z).